We begin with the raw amino-acid sequence, 295 residues long: Small ribosomal subunit protein uS2 (295 aa).

The interval 232–295 (RRRGTDEKPE…DEQPAAAAAE (64 aa)) is disordered. Positions 252–287 (EWERELLEEPKKSDEQPAKSDELPVKTDEQPTKSDE) are enriched in basic and acidic residues.

It belongs to the universal ribosomal protein uS2 family.

The polypeptide is Small ribosomal subunit protein uS2 (Salinispora tropica (strain ATCC BAA-916 / DSM 44818 / JCM 13857 / NBRC 105044 / CNB-440)).